The following is a 394-amino-acid chain: Phosphoglycerate kinase (394 aa).

Residues 21–23, R36, 59–62, R118, and R151 each bind substrate; these read DFN and HLGR. Position 183 is a phosphoserine (S183). ATP-binding residues include K201 and G292. Residue T299 is modified to Phosphothreonine. ATP-binding positions include E323 and 350 to 353; that span reads GGDS.

Belongs to the phosphoglycerate kinase family. In terms of assembly, monomer.

It localises to the cytoplasm. It catalyses the reaction (2R)-3-phosphoglycerate + ATP = (2R)-3-phospho-glyceroyl phosphate + ADP. The protein operates within carbohydrate degradation; glycolysis; pyruvate from D-glyceraldehyde 3-phosphate: step 2/5. This is Phosphoglycerate kinase from Bacillus cereus (strain ZK / E33L).